The following is a 59-amino-acid chain: U-actitoxin-Aer2b (59 aa).

In terms of processing, contains 5 disulfide bonds.

It is found in the secreted. Its subcellular location is the nematocyst. The chain is U-actitoxin-Aer2b from Anemonia erythraea (Sea anemone).